The sequence spans 320 residues: Probable cell division protein WhiA (320 aa).

A DNA-binding region (H-T-H motif) is located at residues 282–315 (SLEELGRAARPQISKDAVAGRIRRLLQRAEKAEQ).

This sequence belongs to the WhiA family.

In terms of biological role, involved in cell division and chromosome segregation. This is Probable cell division protein WhiA from Bifidobacterium animalis subsp. lactis (strain AD011).